The following is a 426-amino-acid chain: Homeobox protein knotted-1-like LET12 (426 aa).

Disordered stretches follow at residues 1–26 (MEFQ…QQNA), 85–158 (QTSN…ENSW), and 270–290 (GVAP…DQAD). Low complexity predominate over residues 15-24 (QQQQQQQQQQ). Residues 104–114 (AGGGSNGGGSG) show a composition bias toward gly residues. Low complexity predominate over residues 139–151 (ENNNNNNNNNNNN). The 21-residue stretch at 327-347 (ELKHELKQGYKEKIVDIREEI) folds into the ELK domain. Positions 348–411 (LRKRRAGKLP…NQRKRNWHSN (64 aa)) form a DNA-binding region, homeobox; TALE-type. The segment at 406 to 426 (RNWHSNPSTSSSQKSQTQECR) is disordered. The segment covering 413–426 (STSSSQKSQTQECR) has biased composition (low complexity).

Belongs to the TALE/KNOX homeobox family. As to expression, ubiquitously expressed in the mature plant.

The protein localises to the nucleus. Its function is as follows. May have a role to play in formative events in ovule and embryo morphogenesis. The sequence is that of Homeobox protein knotted-1-like LET12 (LET12) from Solanum lycopersicum (Tomato).